The sequence spans 458 residues: Acetyl-CoA decarbonylase/synthase complex subunit gamma (458 aa).

Residues Met-1–Pro-59 enclose the 4Fe-4S domain. Residues Cys-17, Cys-20, Cys-25, and Cys-42 each contribute to the [4Fe-4S] cluster site.

As to quaternary structure, heterodimer of delta and gamma chains. The ACDS complex is made up of alpha, epsilon, beta, gamma and delta chains with a probable stoichiometry of (alpha(2)epsilon(2))(4)-beta(8)-(gamma(1)delta(1))(8). The cofactor is corrinoid. [4Fe-4S] cluster serves as cofactor.

It carries out the reaction 5,6,7,8-tetrahydrosarcinapterin + methyl-Co(III)-[corrinoid Fe-S protein] = 5-methyltetrahydrosarcinapterin + Co(I)-[corrinoid Fe-S protein] + H(+). Part of a complex that catalyzes the reversible cleavage of acetyl-CoA, allowing autotrophic growth from CO(2). In Methanothermobacter thermautotrophicus (strain ATCC 29096 / DSM 1053 / JCM 10044 / NBRC 100330 / Delta H) (Methanobacterium thermoautotrophicum), this protein is Acetyl-CoA decarbonylase/synthase complex subunit gamma.